The following is a 654-amino-acid chain: Protein fem-1 homolog A (654 aa).

ANK repeat units lie at residues 2–31, 40–70, 82–111, 115–145, 149–178, 182–211, and 214–243; these read DLHTAVYNAAHDGKLLLLQKLLAGRGREEI, GGGTPLLIAARRGHLDVVEYLVDNCGASVEA, EGAPPLWAASAAGHLAVVRSLLRRGASVNR, TNSTPLRAACFDGHLDVVRYLVGEHKADLEV, HGHTCLMISCYKGHREIARYLLERGAQVNR, KGNTALHDCAESGSLEILQLLLGCHARMER, and YGMTPLLAASVTGHTNIVEYLIQEQPGHGQ. Residue S108 is modified to Phosphoserine. The interval 241-265 is disordered; it reads HGQLSGTELPGEGSSQMAGNHCSTP. The segment covering 253-263 has biased composition (polar residues); it reads GSSQMAGNHCS. TPR repeat units lie at residues 283–317 and 375–408; these read VEALELLGATYVDKKRDLLGALKHWRRAMELRHQG and SYYIRYRGAVYADSGNFERCIRLWKYALDMQQNN. ANK repeat units lie at residues 519-561 and 565-594; these read NGFT…DPDS and DNNTPLHVAAQNNCPAIMDALIEAGAHMDA. S608 bears the Phosphoserine mark.

It belongs to the fem-1 family. In terms of assembly, component of a CRL2 E3 ubiquitin-protein ligase complex, also named ECS (Elongin BC-CUL2/5-SOCS-box protein) complex, composed of CUL2, Elongin BC (ELOB and ELOC), RBX1 and substrate-specific adapter FEM1A. Interacts with PTGER4. Interacts with NFKB1; the interaction is direct. Post-translationally, phosphorylated; highly phosphorylated in myoblasts and myotubes. Phosphorylation at Ser-108 and Ser-608 promote PGE2-EP4-mediated inhibition of inflammation. Dephosphorylated by protein phosphatase 2A (PP2A).

It is found in the mitochondrion. It localises to the cytoplasm. It functions in the pathway protein modification; protein ubiquitination. Its function is as follows. Substrate-recognition component of a Cul2-RING (CRL2) E3 ubiquitin-protein ligase complex of the DesCEND (destruction via C-end degrons) pathway, which recognizes a C-degron located at the extreme C terminus of target proteins, leading to their ubiquitination and degradation. The C-degron recognized by the DesCEND pathway is usually a motif of less than ten residues and can be present in full-length proteins, truncated proteins or proteolytically cleaved forms. The CRL2(FEM1A) complex specifically recognizes proteins with an arginine at the C-terminus: recognizes and binds proteins ending with -Lys/Arg-Xaa-Arg and -Lys/Arg-Xaa-Xaa-Arg C-degrons, such as SIL1 or OR51B2, leading to their ubiquitination and degradation. Involved in PGE2-EP4-mediated inhibition of inflammation of macrophages via interaction with NFKB1 and PTGER4. Promotes inflammation in brain microglia through MAP2K4/MKK4-mediated signaling. In Rattus norvegicus (Rat), this protein is Protein fem-1 homolog A.